The following is a 269-amino-acid chain: tRNA pseudouridine synthase A (269 aa).

Catalysis depends on Asp51, which acts as the Nucleophile. Tyr109 provides a ligand contact to substrate.

It belongs to the tRNA pseudouridine synthase TruA family. Homodimer.

It carries out the reaction uridine(38/39/40) in tRNA = pseudouridine(38/39/40) in tRNA. Functionally, formation of pseudouridine at positions 38, 39 and 40 in the anticodon stem and loop of transfer RNAs. This Histophilus somni (strain 129Pt) (Haemophilus somnus) protein is tRNA pseudouridine synthase A.